Consider the following 244-residue polypeptide: MTDLPEKEGGRFHASVLTLYPEMFPGPLGISLAGKALAEGKWQLDTVQIRDFAEGRHRMVDDTPSGGGAGMVMKADVVARALDSVDDGRPMLLMTPRGKPLTQERVRALADGAGAIILCGHFEGVDERVIEGRNLEEISIGDYILSGGETAAIVLLDAVVRLLPGVMGNRESGETESFETGLLEHPHYTRPQEWEGRAIPDILTSGNHGAIDKWRLEQAERITRERRPDLWEAYCKNRRKIGGQ.

S-adenosyl-L-methionine is bound by residues Gly120 and 140-145 (IGDYIL).

It belongs to the RNA methyltransferase TrmD family. As to quaternary structure, homodimer.

Its subcellular location is the cytoplasm. The enzyme catalyses guanosine(37) in tRNA + S-adenosyl-L-methionine = N(1)-methylguanosine(37) in tRNA + S-adenosyl-L-homocysteine + H(+). Its function is as follows. Specifically methylates guanosine-37 in various tRNAs. The polypeptide is tRNA (guanine-N(1)-)-methyltransferase (Brucella canis (strain ATCC 23365 / NCTC 10854 / RM-666)).